The chain runs to 503 residues: UDP-N-acetylmuramate--L-alanine ligase (503 aa).

Positions 1–22 are disordered; that stretch reads MIKQTHVSNSSNNSTNSTAAQV. The segment covering 8–18 has biased composition (low complexity); sequence SNSSNNSTNST. Residue 135–141 participates in ATP binding; the sequence is GTHGKTT.

It belongs to the MurCDEF family.

The protein resides in the cytoplasm. It catalyses the reaction UDP-N-acetyl-alpha-D-muramate + L-alanine + ATP = UDP-N-acetyl-alpha-D-muramoyl-L-alanine + ADP + phosphate + H(+). It functions in the pathway cell wall biogenesis; peptidoglycan biosynthesis. Functionally, cell wall formation. In Colwellia psychrerythraea (strain 34H / ATCC BAA-681) (Vibrio psychroerythus), this protein is UDP-N-acetylmuramate--L-alanine ligase.